Consider the following 525-residue polypeptide: MASPIASAALRARVKRPSMLKKLCNPEDMLQHFPNGAYIGWSGFTGVGYPKKVPTMLADHVEKNGLQGQLKYSLFVGASAGAETENRWAALDMIARRAPHQVGKNIAKGINEGRINFFDKHLSMFPVDLVYGYYTKDRQNKNLDVVCVEATEIKEDGSIVLGASVGATPELIQMADKVIIEVNTAIPSFDGLHDITFSDLPPNRKPYLIQQCRDRIGTTSVPVDPEKVVGIIECTTPDQTLPNSPADETATAIAGHLIEFFEHEVAHGRLPKNLLPLQSGIGNIANAVIGGLETSNFKNLNVWTEVIQDTFLDLFDSGKLDFATATSIRFSPTGFERFYKNWDNYYDKLLLRSQSVSNAPEIIRRLGVIGMNTPVEVDIYAHANSTNVMGSRMLNGLGGSADFLRNSKYSIMHTPSTRPSKTDAHGVSCIVPMCTHVDQTEHDLDVIVTENGLADVRGLSPRERARVIIDKCAHDVYKPILKAYFEKAEFECLRKGMGHEPHLLFNSFDMHKALVEEGSMAKVKF.

280-284 (GIGNI) is a CoA binding site. Glu305 serves as the catalytic 5-glutamyl coenzyme A thioester intermediate. The CoA site is built by Asn395 and Gly399.

This sequence belongs to the acetyl-CoA hydrolase/transferase family.

The protein resides in the cytoplasm. The enzyme catalyses acetyl-CoA + H2O = acetate + CoA + H(+). Its function is as follows. Required for utilization of acetate. The sequence is that of Acetyl-CoA hydrolase (acu-8) from Neurospora crassa (strain ATCC 24698 / 74-OR23-1A / CBS 708.71 / DSM 1257 / FGSC 987).